A 521-amino-acid polypeptide reads, in one-letter code: Vang-like protein 2 (521 aa).

The segment at 1 to 81 (MDTESQYSGY…TTVVTGTSEH (81 aa)) is disordered. Over 1 to 108 (MDTESQYSGY…VPLDCSRHLG (108 aa)) the chain is Cytoplasmic. The segment covering 15-33 (GHSRSSRKHRDRRDRHRSK) has biased composition (basic residues). Residues 57-67 (ESTRGDERDDN) are compositionally biased toward basic and acidic residues. A compositionally biased stretch (low complexity) spans 69 to 81 (GETTTVVTGTSEH). Residues 109 to 129 (VAAGATLALLSFLTPLAFLLL) form a helical membrane-spanning segment. Over 130–147 (PPLLWREELEPCGTACEG) the chain is Extracellular. The chain crosses the membrane as a helical span at residues 148 to 168 (LFISVAFKLLILLLGSWALFF). Over 169 to 178 (RRPKASLPRV) the chain is Cytoplasmic. The helical transmembrane segment at 179-199 (FVLRALLMVLVFLLVVSYWLF) threads the bilayer. Residues 200–217 (YGVRILDARERSYQGVVQ) lie on the Extracellular side of the membrane. A helical transmembrane segment spans residues 218 to 238 (FAVSLVDALLFVHYLAVVLLE). The Cytoplasmic portion of the chain corresponds to 239–521 (LRQLQPQFTL…VMRLQSETSV (283 aa)).

It belongs to the Vang family. Homodimer and heterodimer with VANGL1. Interacts through its C-terminal region with the N-terminal half of DVL1, DVL2 and DVL3. The PDZ domain of DVL1, DVL2 and DVL3 is required for the interaction. Also interacts with the PDZ domains of MAGI3, SCRIB/SCRB1 and FZD3. Interacts with PRICKLE3.

The protein resides in the cell membrane. Involved in the control of early morphogenesis and patterning of both axial midline structures and the development of neural plate. Plays a role in the regulation of planar cell polarity, particularly in the orientation of stereociliary bundles in the cochlea. Required for polarization and movement of myocardializing cells in the outflow tract and seems to act via RHOA signaling to regulate this process. Required for cell surface localization of FZD3 and FZD6 in the inner ear. This Homo sapiens (Human) protein is Vang-like protein 2 (VANGL2).